A 339-amino-acid chain; its full sequence is Nicotinate-nucleotide--dimethylbenzimidazole phosphoribosyltransferase (339 aa).

E306 acts as the Proton acceptor in catalysis.

It belongs to the CobT family.

The enzyme catalyses 5,6-dimethylbenzimidazole + nicotinate beta-D-ribonucleotide = alpha-ribazole 5'-phosphate + nicotinate + H(+). It participates in nucleoside biosynthesis; alpha-ribazole biosynthesis; alpha-ribazole from 5,6-dimethylbenzimidazole: step 1/2. In terms of biological role, catalyzes the synthesis of alpha-ribazole-5'-phosphate from nicotinate mononucleotide (NAMN) and 5,6-dimethylbenzimidazole (DMB). The chain is Nicotinate-nucleotide--dimethylbenzimidazole phosphoribosyltransferase from Brucella melitensis biotype 1 (strain ATCC 23456 / CCUG 17765 / NCTC 10094 / 16M).